The sequence spans 131 residues: Small ribosomal subunit protein uS9 (131 aa).

The protein belongs to the universal ribosomal protein uS9 family.

This Mesoplasma florum (strain ATCC 33453 / NBRC 100688 / NCTC 11704 / L1) (Acholeplasma florum) protein is Small ribosomal subunit protein uS9.